The following is a 421-amino-acid chain: Diaminobutyrate--2-oxoglutarate transaminase (421 aa).

N6-(pyridoxal phosphate)lysine is present on lysine 262.

Belongs to the class-III pyridoxal-phosphate-dependent aminotransferase family. Pyridoxal 5'-phosphate is required as a cofactor.

The catalysed reaction is L-2,4-diaminobutanoate + 2-oxoglutarate = L-aspartate 4-semialdehyde + L-glutamate. The protein operates within amine and polyamine biosynthesis; ectoine biosynthesis; L-ectoine from L-aspartate 4-semialdehyde: step 1/3. In terms of biological role, catalyzes reversively the conversion of L-aspartate beta-semialdehyde (ASA) to L-2,4-diaminobutyrate (DABA) by transamination with L-glutamate. This Vibrio parahaemolyticus serotype O3:K6 (strain RIMD 2210633) protein is Diaminobutyrate--2-oxoglutarate transaminase (ectB).